Consider the following 513-residue polypeptide: t-SNARE domain-containing protein 1 (513 aa).

Disordered stretches follow at residues methionine 1 to arginine 23 and glutamate 49 to phenylalanine 128. Residues alanine 7–glycine 19 are compositionally biased toward gly residues. Residue serine 378 is modified to Phosphoserine. Positions leucine 416 to alanine 478 constitute a t-SNARE coiled-coil homology domain. A helical membrane pass occupies residues cysteine 491 to valine 511.

It localises to the membrane. The chain is t-SNARE domain-containing protein 1 (TSNARE1) from Homo sapiens (Human).